The following is a 44-amino-acid chain: Thymosin beta-4 (44 aa).

Residues 1–25 show a composition bias toward basic and acidic residues; it reads MSDKPDMAEIEKFDKSKLKKTETQE. The interval 1-44 is disordered; that stretch reads MSDKPDMAEIEKFDKSKLKKTETQEKNPLPSKETIEQEKQAGES. N-acetylserine is present on Ser-2. Ser-2 is subject to Phosphoserine. Lys-4 carries the post-translational modification N6-acetyllysine. An N6-acetyllysine; alternate modification is found at Lys-12. Residue Lys-12 forms a Glycyl lysine isopeptide (Lys-Gly) (interchain with G-Cter in SUMO2); alternate linkage. Phosphothreonine is present on Thr-23. At Lys-26 the chain carries N6-acetyllysine. At Ser-31 the chain carries Phosphoserine. Residue Lys-32 is modified to N6-acetyllysine. Residues 33–44 show a composition bias toward basic and acidic residues; it reads ETIEQEKQAGES. Residue Thr-34 is modified to Phosphothreonine. Residue Lys-39 is modified to N6-acetyllysine.

The protein belongs to the thymosin beta family. In terms of assembly, identified in a complex composed of ACTA1, COBL, GSN AND TMSB4X. Interacts with SERPINB1. In terms of processing, acSDKP is inactivated by ACE, which removes the dipeptide Lys-Pro from its C-terminus.

Its subcellular location is the cytoplasm. The protein localises to the cytoskeleton. Plays an important role in the organization of the cytoskeleton. Binds to and sequesters actin monomers (G actin) and therefore inhibits actin polymerization. Its function is as follows. Potent inhibitor of bone marrow derived stem cell differentiation. Acts by inhibits the entry of hematopoietic pluripotent stem cells into the S-phase. The protein is Thymosin beta-4 (TMSB4) of Bos taurus (Bovine).